A 441-amino-acid polypeptide reads, in one-letter code: Transcription factor TOXE (441 aa).

The interval 14 to 40 is basic DNA-binding region; the sequence is TDINERRKLQNRVAQRKYRTRQKTRMK. The tract at residues 209 to 243 is disordered; that stretch reads FEPNDQRKTENLPREPCGSCPSSSHGYSPTSGNPS. Basic and acidic residues predominate over residues 212–221; it reads NDQRKTENLP. The span at 228-241 shows a compositional bias: polar residues; the sequence is CPSSSHGYSPTSGN. ANK repeat units lie at residues 289-318, 322-351, 355-384, and 413-440; these read DQFS…PLDI, SGKT…EMLA, EGNS…SCRE, and EGMT…SANV.

It belongs to the bZIP family. Monomer.

Its subcellular location is the nucleus. In terms of biological role, transcription factor, part of the diffuse TOX2 gene cluster that mediates the biosynthesis of the HC-toxin, cyclic tetrapeptide of structure cyclo(D-Pro-L-Ala-D-Ala-L-Aeo), where Aeo stands for 2-amino-9,10-epoxi-8-oxodecanoic acid. HC-toxin is a determinant of specificity and virulence in the interaction between the producing fungus and its host, maize. TOXE is a pathway-specific transcription factor which coordinates the expression of genes involved in HC-toxin biosynthesis. Binds to the tox-box, a 10-bp motif with the consensus 5'-ATCTCNCGNA-3', which is found in the promoter of all genes involved in HC-toxin biosynthesis. Required for pathogenicity of the fungus on maize. This is Transcription factor TOXE from Cochliobolus carbonum (Maize leaf spot fungus).